Consider the following 358-residue polypeptide: Aerobic magnesium-protoporphyrin IX monomethyl ester [oxidative] cyclase (358 aa).

It belongs to the AcsF family. Requires Fe cation as cofactor.

It catalyses the reaction Mg-protoporphyrin IX 13-monomethyl ester + 3 NADPH + 3 O2 + 2 H(+) = 3,8-divinyl protochlorophyllide a + 3 NADP(+) + 5 H2O. It functions in the pathway porphyrin-containing compound metabolism; chlorophyll biosynthesis. Its function is as follows. Catalyzes the formation of the isocyclic ring in chlorophyll biosynthesis in aerobic conditions. Mediates the cyclase reaction, which results in the formation of divinylprotochlorophyllide (Pchlide) characteristic of all chlorophylls from magnesium-protoporphyrin IX 13-monomethyl ester (MgPMME). The chain is Aerobic magnesium-protoporphyrin IX monomethyl ester [oxidative] cyclase from Rubrivivax gelatinosus (Rhodocyclus gelatinosus).